Reading from the N-terminus, the 228-residue chain is 2,3-bisphosphoglycerate-dependent phosphoglycerate mutase (228 aa).

Substrate-binding positions include 8–15, 21–22, R58, 111–114, K122, 138–139, and 182–183; these read RHGQSVWN, SG, ERMY, RR, and GN. The active-site Tele-phosphohistidine intermediate is the H9. The Proton donor/acceptor role is filled by E111.

Belongs to the phosphoglycerate mutase family. BPG-dependent PGAM subfamily.

The catalysed reaction is (2R)-2-phosphoglycerate = (2R)-3-phosphoglycerate. It participates in carbohydrate degradation; glycolysis; pyruvate from D-glyceraldehyde 3-phosphate: step 3/5. Its function is as follows. Catalyzes the interconversion of 2-phosphoglycerate and 3-phosphoglycerate. This Chlamydia pneumoniae (Chlamydophila pneumoniae) protein is 2,3-bisphosphoglycerate-dependent phosphoglycerate mutase.